The sequence spans 144 residues: Probable calcium-binding protein CML31 (144 aa).

4 consecutive EF-hand domains span residues 1–31, 32–67, 72–107, and 108–143; these read MAEIFESVDKNKDGKILWDEFAEAIRVFSPQ, ITSEEIDKMFIVLDVDGDGQIDDVEFASCLMVNGGG, EEEVVMKEAFDLYDMDGDGKISASEIHVVLKRLGEK, and HTMEDCVVMVQTVDKDSDGFVNFEEFKIMMNSNKES. 14 residues coordinate Ca(2+): D45, D47, D49, Q51, E56, D85, D87, D89, K91, E96, D121, D123, D125, and E132.

Functionally, potential calcium sensor. This chain is Probable calcium-binding protein CML31 (CML31), found in Arabidopsis thaliana (Mouse-ear cress).